The following is a 247-amino-acid chain: ATP synthase subunit a, chloroplastic (247 aa).

5 consecutive transmembrane segments (helical) span residues 38 to 58, 95 to 115, 134 to 154, 199 to 219, and 220 to 240; these read QVLITSWVVIAILLGSAAIAV, VPFIGTMFLFIFVSNWSGALL, INTTVALALLTSVAYFYAGLT, LVVVVLVSLVPLVVPIPVMFL, and GLFTSGIQALIFATLAAAYIG.

This sequence belongs to the ATPase A chain family. As to quaternary structure, F-type ATPases have 2 components, CF(1) - the catalytic core - and CF(0) - the membrane proton channel. CF(1) has five subunits: alpha(3), beta(3), gamma(1), delta(1), epsilon(1). CF(0) has four main subunits: a, b, b' and c.

It is found in the plastid. Its subcellular location is the chloroplast thylakoid membrane. Key component of the proton channel; it plays a direct role in the translocation of protons across the membrane. The polypeptide is ATP synthase subunit a, chloroplastic (Calycanthus floridus var. glaucus (Eastern sweetshrub)).